The primary structure comprises 149 residues: Nucleoside deoxyribosyltransferase (149 aa).

Residue E90 is the Nucleophile of the active site.

This sequence belongs to the nucleoside deoxyribosyltransferase family.

It carries out the reaction 2-deoxy-D-ribosyl-base(1) + base(2) = 2-deoxy-D-ribosyl-base(2) + base(1).. It participates in nucleotide metabolism; nucleotide salvage pathway. In terms of biological role, catalyzes the cleavage of the glycosidic bond of 2'-deoxyribonucleosides and the transfer of the deoxyribosyl moiety to an acceptor purine or pyrimidine base. This Lactobacillus johnsonii (strain CNCM I-12250 / La1 / NCC 533) protein is Nucleoside deoxyribosyltransferase (ntd).